A 180-amino-acid chain; its full sequence is Pituitary tumor-transforming gene 1 protein-interacting protein (180 aa).

Residues 1–32 form the signal peptide; that stretch reads MAPGVARGPTPYWRLRLGGAALLLLLIPVAAA. Residues 33–96 lie on the Extracellular side of the membrane; the sequence is QEPPGAACSQ…RWGVCWVNFE (64 aa). The region spanning 39 to 92 is the PSI domain; that stretch reads ACSQNTNKTCEECLKNVSCLWCNTNKACLDYPVTSVLPPASLCKLSSARWGVCW. Residues Asn45 and Asn54 are each glycosylated (N-linked (GlcNAc...) asparagine). Residues 97-117 traverse the membrane as a helical segment; that stretch reads ALIITMSVVGGTLLLGIAICC. Residues 118 to 180 lie on the Cytoplasmic side of the membrane; sequence CCCCRRKRSR…ENPYARFENN (63 aa). Positions 130-165 form a coiled coil; sequence DRSEEKAMREREERRIRQEERRAEMKTRHDEIRKKY. The segment at 131-157 is disordered; the sequence is RSEEKAMREREERRIRQEERRAEMKTR. Tyr174 carries the post-translational modification Phosphotyrosine.

As to quaternary structure, interacts with PTTG1. As to expression, ubiquitous.

The protein resides in the membrane. The protein localises to the cytoplasm. It is found in the nucleus. In terms of biological role, may facilitate PTTG1 nuclear translocation. This chain is Pituitary tumor-transforming gene 1 protein-interacting protein (PTTG1IP), found in Homo sapiens (Human).